We begin with the raw amino-acid sequence, 194 residues long: Xanthine phosphoribosyltransferase (194 aa).

Residues Leu20 and Asn27 each coordinate xanthine. 128–132 provides a ligand contact to 5-phospho-alpha-D-ribose 1-diphosphate; it reads ANGQA. Residue Lys156 participates in xanthine binding.

This sequence belongs to the purine/pyrimidine phosphoribosyltransferase family. Xpt subfamily. Homodimer.

It localises to the cytoplasm. The catalysed reaction is XMP + diphosphate = xanthine + 5-phospho-alpha-D-ribose 1-diphosphate. It participates in purine metabolism; XMP biosynthesis via salvage pathway; XMP from xanthine: step 1/1. In terms of biological role, converts the preformed base xanthine, a product of nucleic acid breakdown, to xanthosine 5'-monophosphate (XMP), so it can be reused for RNA or DNA synthesis. This chain is Xanthine phosphoribosyltransferase, found in Geobacillus thermodenitrificans (strain NG80-2).